Reading from the N-terminus, the 82-residue chain is Large ribosomal subunit protein uL23 (82 aa).

It belongs to the universal ribosomal protein uL23 family. Part of the 50S ribosomal subunit. Contacts protein L29.

Functionally, binds to 23S rRNA. One of the proteins that surrounds the polypeptide exit tunnel on the outside of the ribosome. The sequence is that of Large ribosomal subunit protein uL23 from Methanococcoides burtonii (strain DSM 6242 / NBRC 107633 / OCM 468 / ACE-M).